Reading from the N-terminus, the 416-residue chain is GTPase Obg (416 aa).

An Obg domain is found at 1–157; that stretch reads MFQDVLVITV…RRLRLELMLI (157 aa). Disordered regions lie at residues 25–44 and 62–82; these read EKFVPKGGPDGGDGGRGGSV and TYKAEDGEHGRGSQQHGRGGE. Gly residues predominate over residues 32–42; that stretch reads GPDGGDGGRGG. Positions 63–72 are enriched in basic and acidic residues; that stretch reads YKAEDGEHGR. One can recognise an OBG-type G domain in the interval 158 to 324; that stretch reads ADVGLVGYPN…LKEALHALVR (167 aa). Residues 164–171, 189–193, 211–214, 277–280, and 305–307 contribute to the GTP site; these read GYPNAGKS, FTTLS, DIPG, NKVD, and SAL. Residues serine 171 and threonine 191 each contribute to the Mg(2+) site. The OCT domain occupies 336 to 414; it reads PRKEVQAGVE…IGGLEFEYIP (79 aa).

This sequence belongs to the TRAFAC class OBG-HflX-like GTPase superfamily. OBG GTPase family. As to quaternary structure, monomer. It depends on Mg(2+) as a cofactor.

Its subcellular location is the cytoplasm. An essential GTPase which binds GTP, GDP and possibly (p)ppGpp with moderate affinity, with high nucleotide exchange rates and a fairly low GTP hydrolysis rate. Plays a role in control of the cell cycle, stress response, ribosome biogenesis and in those bacteria that undergo differentiation, in morphogenesis control. The sequence is that of GTPase Obg from Thermus thermophilus (strain ATCC 27634 / DSM 579 / HB8).